A 558-amino-acid polypeptide reads, in one-letter code: Methionine--tRNA ligase 1 (558 aa).

Positions proline 10–asparagine 20 match the 'HIGH' region motif. 4 residues coordinate Zn(2+): cysteine 142, cysteine 145, cysteine 155, and cysteine 158. The short motif at lysine 332 to serine 336 is the 'KMSKS' region element. Threonine 335 serves as a coordination point for ATP.

Belongs to the class-I aminoacyl-tRNA synthetase family. MetG type 1 subfamily. As to quaternary structure, monomer. The cofactor is Zn(2+).

It localises to the cytoplasm. The catalysed reaction is tRNA(Met) + L-methionine + ATP = L-methionyl-tRNA(Met) + AMP + diphosphate. Its function is as follows. Is required not only for elongation of protein synthesis but also for the initiation of all mRNA translation through initiator tRNA(fMet) aminoacylation. This chain is Methionine--tRNA ligase 1, found in Acaryochloris marina (strain MBIC 11017).